Reading from the N-terminus, the 509-residue chain is Apurinic-apyrimidinic endonuclease 1 (509 aa).

The signal sequence occupies residues 1-24 (MPRHCCCFVFHFLLYMLLINIVKN). Residues 144–188 (EEKDEECDEKTKQDNNKENIKNETIVQKKKIDKNNKTKEKIKTKS) are disordered. Basic and acidic residues-rich tracts occupy residues 152-164 (EKTKQDNNKENIK) and 175-188 (DKNNKTKEKIKTKS). Residues H291, H331, E367, D401, H404, H438, D451, H453, and E483 each coordinate Zn(2+). Residue H404 participates in Mn(2+) binding. D451 and H453 together coordinate Mn(2+).

Belongs to the AP endonuclease 2 family. Zn(2+) is required as a cofactor. The cofactor is Mn(2+). Post-translationally, may be proteolytically cleaved.

Its subcellular location is the mitochondrion. Plays a role in mitochondrial DNA base excision repair (BER) pathway induced by oxidative stress. Has apurinic/apyrimidinic (AP) endonuclease activity towards double-stranded DNA (dsDNA) with a preference for C as opposite base. Has 3'-phosphatase activity; removes 3'-phosphate from blunt-end, recessed, and gapped DNA templates and thus, removes 3'-blocks for DNA polymerase activity during BER. Lacks 3'-5' exonuclease activity and does not cleave damaged bases by nucleotide incision repair (NIR). This is Apurinic-apyrimidinic endonuclease 1 from Plasmodium berghei (strain Anka).